The primary structure comprises 408 residues: S-adenosylmethionine synthase (408 aa).

Residue histidine 15 coordinates ATP. Aspartate 17 provides a ligand contact to Mg(2+). Glutamate 43 contributes to the K(+) binding site. Residues glutamate 56 and glutamine 100 each coordinate L-methionine. A flexible loop region spans residues 100–110 (QSPDIAQGVNE). ATP is bound by residues 171-173 (DGK), 248-249 (KF), aspartate 257, 263-264 (RK), alanine 280, and lysine 284. An L-methionine-binding site is contributed by aspartate 257. Lysine 288 contributes to the L-methionine binding site.

It belongs to the AdoMet synthase family. Homotetramer; dimer of dimers. The cofactor is Mg(2+). K(+) serves as cofactor.

It is found in the cytoplasm. It carries out the reaction L-methionine + ATP + H2O = S-adenosyl-L-methionine + phosphate + diphosphate. It participates in amino-acid biosynthesis; S-adenosyl-L-methionine biosynthesis; S-adenosyl-L-methionine from L-methionine: step 1/1. Its function is as follows. Catalyzes the formation of S-adenosylmethionine (AdoMet) from methionine and ATP. The overall synthetic reaction is composed of two sequential steps, AdoMet formation and the subsequent tripolyphosphate hydrolysis which occurs prior to release of AdoMet from the enzyme. The polypeptide is S-adenosylmethionine synthase (Synechococcus sp. (strain CC9902)).